A 277-amino-acid chain; its full sequence is Peptide deformylase 1A, chloroplastic (277 aa).

Residues C196 and H238 each coordinate Zn(2+). Residue E239 is part of the active site. Zn(2+) is bound at residue H242.

It belongs to the polypeptide deformylase family. Zn(2+) is required as a cofactor.

The protein resides in the plastid. It is found in the chloroplast stroma. It carries out the reaction N-terminal N-formyl-L-methionyl-[peptide] + H2O = N-terminal L-methionyl-[peptide] + formate. In terms of biological role, removes the formyl group from the N-terminal Met of newly synthesized proteins. In Solanum lycopersicum (Tomato), this protein is Peptide deformylase 1A, chloroplastic (PDF1A).